Here is a 656-residue protein sequence, read N- to C-terminus: DNA ligase (656 aa).

Residues 32–36, 81–82, and Glu112 each bind NAD(+); these read DEEYD and SM. Lys114 acts as the N6-AMP-lysine intermediate in catalysis. The NAD(+) site is built by Arg135, Glu169, Lys284, and Lys308. Residues Cys402, Cys405, Cys418, and Cys423 each coordinate Zn(2+). The BRCT domain occupies 577–656; it reads VQKTPFTGKT…DMWKMLKEGK (80 aa).

This sequence belongs to the NAD-dependent DNA ligase family. LigA subfamily. It depends on Mg(2+) as a cofactor. Mn(2+) is required as a cofactor.

The enzyme catalyses NAD(+) + (deoxyribonucleotide)n-3'-hydroxyl + 5'-phospho-(deoxyribonucleotide)m = (deoxyribonucleotide)n+m + AMP + beta-nicotinamide D-nucleotide.. In terms of biological role, DNA ligase that catalyzes the formation of phosphodiester linkages between 5'-phosphoryl and 3'-hydroxyl groups in double-stranded DNA using NAD as a coenzyme and as the energy source for the reaction. It is essential for DNA replication and repair of damaged DNA. The polypeptide is DNA ligase (Nautilia profundicola (strain ATCC BAA-1463 / DSM 18972 / AmH)).